We begin with the raw amino-acid sequence, 702 residues long: MELLKGNAVNLNDTAYYNNRELSWLAFNERVLQEAQDANNPLLERLKFISIFSSNLDEFFMVRVAGLKDQVSAGFNQPENKAGLTPKKQLNKIAIKAHALMTVQYDTFKNYVLPALELEGIERLTFNDLTKEQREFIEEYFDEQIFPVLTPVAIDAYRPFPMLLNKSLNLATLLYDEKQAEEENRTKLGIVQVPSLLERFIILPSEGQKHKFILLEDVISSFTHKLFTGYTVSSVTRFRITRNADLTIHEEGARDLLKVIEKELKKRKWGAAVRLEVGKEHIDERVLALLYEVLEVKDEDVYIMDGPLDLTCLFSLYKKLAPLYEHLVYPALIPQPPQDLGDEEDVFEKAIEHDILLHHPFESFQPVVDFVRDAADDPNVLAIKQTLYRVSGDSPIIQALKIAAEKGKQVTVLVELKARFDEENNVHWAKELEQAGCHVIYGVSHLKTHSKITLVVRRKNGKIERFVHLGTGNYNDATAKLYTDFGYITSRKDFGVDATNFFNYLSGYTTKPHFHHLSVAPFDIREQFMDLIDEEIRYHRQYGNGYIIAKMNSLTDKPLIKKMYEASQAGVKVELIVRGTCCLRPGIPNVSENIRVVSVVGRYLEHSRIYYFHHNGEEKIYLSSADLMTRNMEKRVEISFPILDIEMKARIKAILQLILADNVKTREQNKDGDYYYVINGSTEEIDSQVKLFKMAYQNTDAE.

Asn55 lines the ATP pocket. The Mg(2+) site is built by Arg389 and Arg419. The Phosphohistidine intermediate role is filled by His449. ATP-binding residues include Tyr482, Arg578, and His606.

The protein belongs to the polyphosphate kinase 1 (PPK1) family. Mg(2+) serves as cofactor. In terms of processing, an intermediate of this reaction is the autophosphorylated ppk in which a phosphate is covalently linked to a histidine residue through a N-P bond.

The enzyme catalyses [phosphate](n) + ATP = [phosphate](n+1) + ADP. In terms of biological role, catalyzes the reversible transfer of the terminal phosphate of ATP to form a long-chain polyphosphate (polyP). This chain is Polyphosphate kinase, found in Bacillus cereus (strain ATCC 14579 / DSM 31 / CCUG 7414 / JCM 2152 / NBRC 15305 / NCIMB 9373 / NCTC 2599 / NRRL B-3711).